The sequence spans 567 residues: MRFSKFYAPTTKEAPKDASLPSHIFLVRGGFVEQIGSGLYNFLPLGKMMLDKITKVVKEEMDAAGVLEVSFSVVTSGELWKQSGRFNVFGKELLRFKDRKENDFVLSPTNEEAAVALVRGKVTSYKQLPLNIYQINTKFRDEARPRFGLLRGREFTMKDAYSFHANEADMKREFDLMEATYSKIFTRLGLNFRAVEADSGAIGGSGSKEFMVLAKNGEDDILCCDSCKYAANVEAAKRAKKTSDAPAPQADATKFYTPDAKTIKAVAEFFKVDEFYTIKAVIKKAIYEDTQKIVAFFVRGNDELQETKAQNACGALELVDASEDEVAAAGLVAGFCGPVGLSGVDFYIDNELKGQTQMICGANEKDYHFVGVSVSSFNDERFKDLVSVQAGDICPKCGGKLELSKGIEVGHIFQLGYKYSSAMGATFLDENGKARPFLMGCYGIGVSRLIAVMVEASHDDRGCVWKKECTPFECEIVISNLKDEAGVKFATKLYENLRNLGLCVLLDDRNERFGVKMNDFELLGFPYAIIVGKGLENGEVELITRDGLVKEVVKKDEILSVLKEKLC.

This sequence belongs to the class-II aminoacyl-tRNA synthetase family. ProS type 1 subfamily. In terms of assembly, homodimer.

Its subcellular location is the cytoplasm. It catalyses the reaction tRNA(Pro) + L-proline + ATP = L-prolyl-tRNA(Pro) + AMP + diphosphate. In terms of biological role, catalyzes the attachment of proline to tRNA(Pro) in a two-step reaction: proline is first activated by ATP to form Pro-AMP and then transferred to the acceptor end of tRNA(Pro). As ProRS can inadvertently accommodate and process non-cognate amino acids such as alanine and cysteine, to avoid such errors it has two additional distinct editing activities against alanine. One activity is designated as 'pretransfer' editing and involves the tRNA(Pro)-independent hydrolysis of activated Ala-AMP. The other activity is designated 'posttransfer' editing and involves deacylation of mischarged Ala-tRNA(Pro). The misacylated Cys-tRNA(Pro) is not edited by ProRS. This chain is Proline--tRNA ligase, found in Campylobacter curvus (strain 525.92).